The following is a 448-amino-acid chain: Tubulin alpha chain (448 aa).

8 residues coordinate GTP: Gln-12, Glu-73, Ser-142, Gly-146, Thr-147, Thr-181, Asn-208, and Asn-230. Glu-73 contributes to the Mg(2+) binding site. Glu-256 is a catalytic residue.

The protein belongs to the tubulin family. As to quaternary structure, dimer of alpha and beta chains. A typical microtubule is a hollow water-filled tube with an outer diameter of 25 nm and an inner diameter of 15 nM. Alpha-beta heterodimers associate head-to-tail to form protofilaments running lengthwise along the microtubule wall with the beta-tubulin subunit facing the microtubule plus end conferring a structural polarity. Microtubules usually have 13 protofilaments but different protofilament numbers can be found in some organisms and specialized cells. Mg(2+) is required as a cofactor.

It is found in the cytoplasm. It localises to the cytoskeleton. It catalyses the reaction GTP + H2O = GDP + phosphate + H(+). Functionally, tubulin is the major constituent of microtubules, a cylinder consisting of laterally associated linear protofilaments composed of alpha- and beta-tubulin heterodimers. Microtubules grow by the addition of GTP-tubulin dimers to the microtubule end, where a stabilizing cap forms. Below the cap, tubulin dimers are in GDP-bound state, owing to GTPase activity of alpha-tubulin. The sequence is that of Tubulin alpha chain (TUB1) from Eremothecium gossypii (strain ATCC 10895 / CBS 109.51 / FGSC 9923 / NRRL Y-1056) (Yeast).